A 48-amino-acid polypeptide reads, in one-letter code: ATP synthase protein 8 (48 aa).

A helical transmembrane segment spans residues 12-32; the sequence is LLTGGILAISLLLYFVATYLL.

This sequence belongs to the ATPase protein 8 family. F-type ATPases have 2 components, CF(1) - the catalytic core - and CF(0) - the membrane proton channel.

The protein resides in the mitochondrion membrane. Functionally, mitochondrial membrane ATP synthase (F(1)F(0) ATP synthase or Complex V) produces ATP from ADP in the presence of a proton gradient across the membrane which is generated by electron transport complexes of the respiratory chain. F-type ATPases consist of two structural domains, F(1) - containing the extramembraneous catalytic core and F(0) - containing the membrane proton channel, linked together by a central stalk and a peripheral stalk. During catalysis, ATP synthesis in the catalytic domain of F(1) is coupled via a rotary mechanism of the central stalk subunits to proton translocation. Part of the complex F(0) domain. Minor subunit located with subunit a in the membrane. This chain is ATP synthase protein 8 (ATP8), found in Candida parapsilosis (Yeast).